A 183-amino-acid polypeptide reads, in one-letter code: Microfibrillar-associated protein 2 (183 aa).

The or 19 signal peptide spans 1–17 (MRAAYLFLLFLPAGLLA). Residue Gln18 is modified to Pyrrolidone carboxylic acid. Sulfotyrosine is present on residues Tyr47, Tyr48, and Tyr50. The interval 58–94 (SEEQFQFQSQQQVQQEVIPAPTPEPGNAELEPTEPGP) is disordered. The segment covering 60 to 74 (EQFQFQSQQQVQQEV) has biased composition (low complexity). The ShKT domain maps to 153-183 (CRDKFSKCGVMASSGLCQSVAASCARSCGSC). Disulfide bonds link Cys153–Cys183, Cys160–Cys176, and Cys169–Cys180.

This sequence belongs to the MFAP family. Forms a ternary complex with BGN and ELN. Interacts with FBN1 (via N-terminal domain) and FBN2. Post-translationally, forms intermolecular disulfide bonds either with other MAGP-1 molecules or with other components of the microfibrils. May form transglutaminase cross-links. O-glycosylated.

The protein resides in the secreted. It is found in the extracellular space. The protein localises to the extracellular matrix. Functionally, component of the elastin-associated microfibrils. This is Microfibrillar-associated protein 2 (MFAP2) from Homo sapiens (Human).